A 361-amino-acid polypeptide reads, in one-letter code: Cyclin-dependent kinase 10 (361 aa).

The region spanning 37–321 (FEKLNRIGEG…AGDCLESSYF (285 aa)) is the Protein kinase domain. Residues 43–51 (IGEGTYGIV) and Lys66 contribute to the ATP site. Residue Asp161 is the Proton acceptor of the active site. A Phosphothreonine modification is found at Thr194. Positions 332–361 (LMPTFPHHRNKRATPATSLGTESQSRRGRP) are disordered.

Belongs to the protein kinase superfamily. CMGC Ser/Thr protein kinase family. CDC2/CDKX subfamily. As to quaternary structure, heterodimer with CCNQ, the interaction is required for kinase activity. Interacts with ETS2. Interacts with PRK2.

It is found in the cytoplasm. Its subcellular location is the cytoskeleton. The protein resides in the cilium basal body. The enzyme catalyses L-seryl-[protein] + ATP = O-phospho-L-seryl-[protein] + ADP + H(+). It carries out the reaction L-threonyl-[protein] + ATP = O-phospho-L-threonyl-[protein] + ADP + H(+). Cyclin-dependent kinase that phosphorylates the transcription factor ETS2 (in vitro) and positively controls its proteasomal degradation (in cells). Involved in the regulation of actin cytoskeleton organization through the phosphorylation of actin dynamics regulators such as PKN2. Is a negative regulator of ciliogenesis through phosphorylation of PKN2 and promotion of RhoA signaling. This chain is Cyclin-dependent kinase 10 (CDK10), found in Bos taurus (Bovine).